The chain runs to 415 residues: rRNA methyltransferase 3, mitochondrial (415 aa).

The N-terminal 47 residues, 1-47 (MAALCRGTVRACILKPLGLSVSLQVKRNVRALRRTPVRVLPAAEKGR), are a transit peptide targeting the mitochondrion. Residues 41–73 (PAAEKGRERKEVEARRPQQPRQSEYQTRTSQGV) form a disordered region. Over residues 44–56 (EKGRERKEVEARR) the composition is skewed to basic and acidic residues. A compositionally biased stretch (polar residues) spans 59–73 (QPRQSEYQTRTSQGV). Residues glycine 357, isoleucine 381, and leucine 390 each contribute to the S-adenosyl-L-methionine site.

It belongs to the class IV-like SAM-binding methyltransferase superfamily. RNA methyltransferase TrmH family.

The protein resides in the mitochondrion. It carries out the reaction a uridine in rRNA + S-adenosyl-L-methionine = a 2'-O-methyluridine in rRNA + S-adenosyl-L-homocysteine + H(+). Its function is as follows. S-adenosyl-L-methionine-dependent 2'-O-ribose methyltransferase that catalyzes the formation of 2'-O-methylguanosine at position 1370 (Gm1370) in the mitochondrial large subunit ribosomal RNA (mtLSU rRNA), a conserved modification in the peptidyl transferase domain of the mtLSU rRNA. Also required for formation of 2'-O-methyluridine at position 1369 (Um1369) mediated by MRM2. The sequence is that of rRNA methyltransferase 3, mitochondrial from Xenopus tropicalis (Western clawed frog).